A 287-amino-acid chain; its full sequence is uncharacterized protein (287 aa).

Positions 1–44 (MAAPRNLTGDGGARQLVKDEESPAASSAAKGLLNDDSPTGKRTK) are disordered. Ser37 carries the phosphoserine modification. 5 helical membrane passes run 55-75 (FAVFFTVFLVFTTGLFCIYLT), 124-144 (TFMIPGTIFMSLLAGALFGVV), 147-167 (FVLVVLNATAGACSCFFLSKL), 218-238 (PIVDIPFHVFFLATLVGLMPA), and 260-280 (DFKTLSVLFLIGSISIFPALL).

The protein localises to the membrane. This is an uncharacterized protein from Arabidopsis thaliana (Mouse-ear cress).